The sequence spans 628 residues: UvrABC system protein C (628 aa).

Residues 21 to 100 form the GIY-YIG domain; that stretch reads TGPGIYQFKN…IKELKPRYNV (80 aa). The 36-residue stretch at 214-249 folds into the UVR domain; sequence AGLLKELHEKMLTAAAELRFEEAAELKMQLQSLRRY.

The protein belongs to the UvrC family. In terms of assembly, interacts with UvrB in an incision complex.

It localises to the cytoplasm. Functionally, the UvrABC repair system catalyzes the recognition and processing of DNA lesions. UvrC both incises the 5' and 3' sides of the lesion. The N-terminal half is responsible for the 3' incision and the C-terminal half is responsible for the 5' incision. In Chlorobium luteolum (strain DSM 273 / BCRC 81028 / 2530) (Pelodictyon luteolum), this protein is UvrABC system protein C.